Reading from the N-terminus, the 251-residue chain is Small ribosomal subunit protein uS2 (251 aa).

Belongs to the universal ribosomal protein uS2 family.

This is Small ribosomal subunit protein uS2 from Deinococcus deserti (strain DSM 17065 / CIP 109153 / LMG 22923 / VCD115).